Consider the following 478-residue polypeptide: Methionine aminopeptidase 2 (478 aa).

Positions 1-122 (MAGVEQAASF…TDPPSVPICD (122 aa)) are disordered. Ala-2 carries the post-translational modification N-acetylalanine. The segment covering 36-46 (KKKRRKKKKGK) has biased composition (basic residues). The residue at position 60 (Ser-60) is a Phosphoserine; alternate. An O-linked (GlcNAc) serine; alternate glycan is attached at Ser-60. The span at 80-92 (ERDDDDEDGDGDA) shows a compositional bias: acidic residues. Residues 97 to 109 (GKKKKKKKKKRGP) are compositionally biased toward basic residues. His-231 is a substrate binding site. 3 residues coordinate a divalent metal cation: Asp-251, Asp-262, and His-331. Residue His-339 coordinates substrate. Glu-364 and Glu-459 together coordinate a divalent metal cation.

It belongs to the peptidase M24A family. Methionine aminopeptidase eukaryotic type 2 subfamily. As to quaternary structure, binds EIF2S1 at low magnesium concentrations. Interacts strongly with the eIF-2 gamma-subunit EIF2S3. Co(2+) serves as cofactor. Zn(2+) is required as a cofactor. It depends on Mn(2+) as a cofactor. The cofactor is Fe(2+). Post-translationally, contains approximately 12 O-linked N-acetylglucosamine (GlcNAc) residues. O-glycosylation is required for EIF2S1 binding.

The protein resides in the cytoplasm. The enzyme catalyses Release of N-terminal amino acids, preferentially methionine, from peptides and arylamides.. Its function is as follows. Cotranslationally removes the N-terminal methionine from nascent proteins. The N-terminal methionine is often cleaved when the second residue in the primary sequence is small and uncharged (Met-Ala-, Cys, Gly, Pro, Ser, Thr, or Val). Protects eukaryotic initiation factor EIF2S1 from translation-inhibiting phosphorylation by inhibitory kinases such as EIF2AK2/PKR and EIF2AK1/HCR. Plays a critical role in the regulation of protein synthesis. This chain is Methionine aminopeptidase 2 (Metap2), found in Mus musculus (Mouse).